Here is a 374-residue protein sequence, read N- to C-terminus: Alanine racemase (374 aa).

K35 serves as the catalytic Proton acceptor; specific for D-alanine. K35 is subject to N6-(pyridoxal phosphate)lysine. R130 lines the substrate pocket. Y261 functions as the Proton acceptor; specific for L-alanine in the catalytic mechanism. A substrate-binding site is contributed by M309.

This sequence belongs to the alanine racemase family. Requires pyridoxal 5'-phosphate as cofactor.

The enzyme catalyses L-alanine = D-alanine. Its pathway is amino-acid biosynthesis; D-alanine biosynthesis; D-alanine from L-alanine: step 1/1. Its function is as follows. Catalyzes the interconversion of L-alanine and D-alanine. May also act on other amino acids. This chain is Alanine racemase (alr), found in Albidiferax ferrireducens (strain ATCC BAA-621 / DSM 15236 / T118) (Rhodoferax ferrireducens).